Consider the following 366-residue polypeptide: D-alanine--D-alanine ligase (366 aa).

The ATP-grasp domain maps to 149 to 358 (KIAFDHAGLP…FSELVDTLIQ (210 aa)). Residue 185–240 (ETTLEYPCFVKPANLGSSVGIAKVRSRSELETALDNAASYDRRIIVEAGVEAKELE) coordinates ATP. Mg(2+) is bound by residues Asp311, Glu325, and Asn327.

The protein belongs to the D-alanine--D-alanine ligase family. Mg(2+) is required as a cofactor. The cofactor is Mn(2+).

Its subcellular location is the cytoplasm. The enzyme catalyses 2 D-alanine + ATP = D-alanyl-D-alanine + ADP + phosphate + H(+). Its pathway is cell wall biogenesis; peptidoglycan biosynthesis. Cell wall formation. This is D-alanine--D-alanine ligase from Trichodesmium erythraeum (strain IMS101).